Reading from the N-terminus, the 143-residue chain is Transcriptional regulator MraZ (143 aa).

SpoVT-AbrB domains are found at residues 5–47 and 76–119; these read EFEH…PLSE and AVQC…NKAR.

Belongs to the MraZ family. Forms oligomers.

It is found in the cytoplasm. The protein resides in the nucleoid. The sequence is that of Transcriptional regulator MraZ from Pediococcus pentosaceus (strain ATCC 25745 / CCUG 21536 / LMG 10740 / 183-1w).